Reading from the N-terminus, the 871-residue chain is DNA mismatch repair protein MutS (871 aa).

620 to 627 (GPNMGGKS) contacts ATP. Residues 806 to 837 (HHGGLNEPKQATMELTPPPEAIPSHTEKRNPL) form a disordered region.

Belongs to the DNA mismatch repair MutS family.

Its function is as follows. This protein is involved in the repair of mismatches in DNA. It is possible that it carries out the mismatch recognition step. This protein has a weak ATPase activity. This Idiomarina loihiensis (strain ATCC BAA-735 / DSM 15497 / L2-TR) protein is DNA mismatch repair protein MutS.